We begin with the raw amino-acid sequence, 21 residues long: Bradykinin-potentiating peptide K12 (21 aa).

The tract at residues 1 to 21 is disordered; the sequence is LRDYANRVINGGPVEAAGPPA.

As to expression, expressed by the venom gland.

Its subcellular location is the secreted. Inhibits angiotensin-converting enzyme (ACE), but does not serve as substrate for the enzyme. Potentiate bradykinin (BK) on the isolated guinea pig ileum as well as the isolated rat uterus for contraction. Also potentiates in vivo the depressor effect of BK on arterial blood pressure in the normotensive anesthetized rat. Intracerebroventricular injection into mice does not show toxic activity. The sequence is that of Bradykinin-potentiating peptide K12 from Buthus occitanus (Common European scorpion).